Reading from the N-terminus, the 140-residue chain is Truncated tyrosine phosphatase D1 (140 aa).

A Tyrosine-protein phosphatase domain is found at 1–140; sequence MRRPNCIAEI…SAQWIQFLKK (140 aa).

Belongs to the protein-tyrosine phosphatase family.

The sequence is that of Truncated tyrosine phosphatase D1 (D1) from Microplitis demolitor bracovirus (isolate Webb) (MdBV).